We begin with the raw amino-acid sequence, 239 residues long: Purine nucleoside phosphorylase DeoD-type (239 aa).

H5 lines the a purine D-ribonucleoside pocket. G21 and R25 together coordinate phosphate. Position 27 is an N6-acetyllysine (K27). Phosphate contacts are provided by residues R44 and 88–91 (RVGS). Residues 180-182 (EME) and 204-205 (SD) contribute to the a purine D-ribonucleoside site. The active-site Proton donor is the D205.

This sequence belongs to the PNP/UDP phosphorylase family. As to quaternary structure, homohexamer; trimer of homodimers.

The enzyme catalyses a purine D-ribonucleoside + phosphate = a purine nucleobase + alpha-D-ribose 1-phosphate. It carries out the reaction a purine 2'-deoxy-D-ribonucleoside + phosphate = a purine nucleobase + 2-deoxy-alpha-D-ribose 1-phosphate. In terms of biological role, catalyzes the reversible phosphorolytic breakdown of the N-glycosidic bond in the beta-(deoxy)ribonucleoside molecules, with the formation of the corresponding free purine bases and pentose-1-phosphate. The protein is Purine nucleoside phosphorylase DeoD-type of Shigella dysenteriae serotype 1 (strain Sd197).